Here is an 87-residue protein sequence, read N- to C-terminus: Probable Fe(2+)-trafficking protein (87 aa).

The protein belongs to the Fe(2+)-trafficking protein family.

Its function is as follows. Could be a mediator in iron transactions between iron acquisition and iron-requiring processes, such as synthesis and/or repair of Fe-S clusters in biosynthetic enzymes. This is Probable Fe(2+)-trafficking protein from Francisella philomiragia subsp. philomiragia (strain ATCC 25017 / CCUG 19701 / FSC 153 / O#319-036).